Consider the following 177-residue polypeptide: ADP-ribosylation factor-like protein 3 (177 aa).

A lipid anchor (N-myristoyl glycine) is attached at Gly-2. GTP-binding positions include 23-31, 125-128, and Ala-159; these read GLDNAGKTT and NKQD.

Belongs to the small GTPase superfamily. Arf family.

The protein localises to the golgi apparatus membrane. The protein resides in the cytoplasm. It localises to the cytoskeleton. It is found in the spindle. Its subcellular location is the nucleus. The protein localises to the microtubule organizing center. In terms of biological role, small GTP-binding protein which cycles between an inactive GDP-bound and an active GTP-bound form, and the rate of cycling is regulated by guanine nucleotide exchange factors (GEF) and GTPase-activating proteins (GAP). Required for normal cytokinesis and cilia signaling. Required for targeting proteins to the ciliary membrane by releasing myristoylated protein from unc119 cargo adapters into the cilium. The chain is ADP-ribosylation factor-like protein 3 from Chlamydomonas reinhardtii (Chlamydomonas smithii).